The primary structure comprises 834 residues: MALIRCCFEPPELPEFFDSFVQKCTDPSCCCGCCSALRPRYKRLVDNIFPVNPEDGLVKSNMEKLTFYSLSSPDKLDRIGEYLYQKATKDINRKRYKLAEIAMEAMDLLLQACHAQTTLNLFVESFLRMVQKLLEDSNPNLKIMATNSFVKFANINEDTPSYHRRYDFFISKFSSMCHSDAASMRDSLRLAGIKGLQGVIRKTVSDDLVENIWEAEHMEKIVPSLLFNMQFCVNVMFVKKNLLASGDLTPVEDATNVTPPALAEEVLRELVGRASFGHIRSVLKPLLTHLDRHELWVPNTFAIHTFRIVMISIQPQYSYTVVETLMQHLDNNFKSSPKTRTSLAVVLSKIIAIAAGESVGPSALDIINNLLTHLRTSVSTTSEITPEESQYQEALINALGEFANHHPDYQKIEIMLFIMNTVPDLSKKSKGDQMLQNILLKSLLKVGTQYSTVSFEKAFPASFLQPLLKMARAPHNPTRMVVMQILQALLDRHQNEQVLSSVSVKPYPALSQEPPSRSDIIFTHKYGANIMQALIDSMALSDRVDALTSSFNTAALLIVEMSCNETVQEFLLFILGIQQVACTVDTLGNVHKCSLHAISIGLLVLISRVSGINNLLEYAQKIVDARREEASHFLPPLLEPKKLAGKTFNLQLPHLAIDKLALGECLQNAGMDAQRLNTGAPYSLNQTDHPGHRHSWVESVSNQLTQRNSSADLTVYNGDVDSVSSSPGVCKKLLAPEFNFDAMKRALAEPTEAAKREQRERQMQIVRTFREGEFDDLMRRTEPKHDLIQNRLNELFNSLAVERQITQSDTKSSQLQASNEKPIYETNFPELFYY.

The stretch at 120 to 156 (NLFVESFLRMVQKLLEDSNPNLKIMATNSFVKFANIN) is one HEAT repeat. The helical transmembrane segment at 595 to 612 (LHAISIGLLVLISRVSGI) threads the bilayer.

The protein belongs to the EFR3 family. Expression during embryogenesis is ubiquitous with notably higher levels in the CNS and brain.

It is found in the membrane. Functionally, an essential gene required for embryogenesis; required for cell viability. The sequence is that of Protein EFR3 homolog cmp44E (stmA) from Drosophila melanogaster (Fruit fly).